Consider the following 243-residue polypeptide: 23S rRNA (guanosine-2'-O-)-methyltransferase RlmB (243 aa).

Positions 196, 216, and 225 each coordinate S-adenosyl-L-methionine.

This sequence belongs to the class IV-like SAM-binding methyltransferase superfamily. RNA methyltransferase TrmH family. RlmB subfamily. Homodimer.

It localises to the cytoplasm. It catalyses the reaction guanosine(2251) in 23S rRNA + S-adenosyl-L-methionine = 2'-O-methylguanosine(2251) in 23S rRNA + S-adenosyl-L-homocysteine + H(+). Specifically methylates the ribose of guanosine 2251 in 23S rRNA. The protein is 23S rRNA (guanosine-2'-O-)-methyltransferase RlmB of Shigella flexneri.